The sequence spans 208 residues: Putative archaetidylserine decarboxylase proenzyme (208 aa).

Serine 172 functions as the Schiff-base intermediate with substrate; via pyruvic acid in the catalytic mechanism. At serine 172 the chain carries Pyruvic acid (Ser); by autocatalysis.

The protein belongs to the phosphatidylserine decarboxylase family. PSD-A subfamily. As to quaternary structure, heterodimer of a large membrane-associated beta subunit and a small pyruvoyl-containing alpha subunit. Pyruvate is required as a cofactor. Post-translationally, is synthesized initially as an inactive proenzyme. Formation of the active enzyme involves a self-maturation process in which the active site pyruvoyl group is generated from an internal serine residue via an autocatalytic post-translational modification. Two non-identical subunits are generated from the proenzyme in this reaction, and the pyruvate is formed at the N-terminus of the alpha chain, which is derived from the carboxyl end of the proenzyme. The post-translation cleavage follows an unusual pathway, termed non-hydrolytic serinolysis, in which the side chain hydroxyl group of the serine supplies its oxygen atom to form the C-terminus of the beta chain, while the remainder of the serine residue undergoes an oxidative deamination to produce ammonia and the pyruvoyl prosthetic group on the alpha chain.

Its subcellular location is the cell membrane. It carries out the reaction archaetidylserine + H(+) = archaetidylethanolamine + CO2. In terms of biological role, catalyzes the formation of archaetidylethanolamine (PtdEtn) from archaetidylserine (PtdSer). This is Putative archaetidylserine decarboxylase proenzyme from Methanosarcina acetivorans (strain ATCC 35395 / DSM 2834 / JCM 12185 / C2A).